The chain runs to 924 residues: Periplasmic nitrate reductase (924 aa).

A signal peptide (tat-type signal) is located at residues 1 to 29 (MNRRDFIKNTAIASACGVAGLSVPSSVLA). A 4Fe-4S Mo/W bis-MGD-type domain is found at 35 to 91 (WRWDKAVCRFCGTGCGILVARQDGKIVAVKGDPAAPVNRGLNCIKGYFNAKIMYGED). [4Fe-4S] cluster-binding residues include Cys42, Cys45, Cys49, and Cys77. Residues Lys79, Gln147, Asn172, Cys176, 209–216 (WGANMAEM), Met417, Gln421, Asn527, 552–553 (SD), Lys575, Asp602, and 814–823 (TGRVLEHWHS) contribute to the Mo-bis(molybdopterin guanine dinucleotide) site. Trp890 provides a ligand contact to substrate. Positions 898 and 915 each coordinate Mo-bis(molybdopterin guanine dinucleotide).

This sequence belongs to the prokaryotic molybdopterin-containing oxidoreductase family. NasA/NapA/NarB subfamily. As to quaternary structure, component of the periplasmic nitrate reductase NapAB complex composed of NapA and NapB. The cofactor is [4Fe-4S] cluster. Mo-bis(molybdopterin guanine dinucleotide) is required as a cofactor. Post-translationally, predicted to be exported by the Tat system. The position of the signal peptide cleavage has not been experimentally proven.

The protein localises to the periplasm. It catalyses the reaction 2 Fe(II)-[cytochrome] + nitrate + 2 H(+) = 2 Fe(III)-[cytochrome] + nitrite + H2O. Its function is as follows. Catalytic subunit of the periplasmic nitrate reductase complex NapAB. Receives electrons from NapB and catalyzes the reduction of nitrate to nitrite. This is Periplasmic nitrate reductase from Campylobacter lari (strain RM2100 / D67 / ATCC BAA-1060).